We begin with the raw amino-acid sequence, 1480 residues long: Cystic fibrosis transmembrane conductance regulator (1480 aa).

Topologically, residues 1 to 77 are cytoplasmic; that stretch reads MQRSPLEKAS…KLINALRRCF (77 aa). A helical membrane pass occupies residues 78 to 98; sequence FWRFMFYGIFLYLGEVTKAVQ. The ABC transmembrane type-1 1 domain maps to 81–365; the sequence is FMFYGIFLYL…WAVQTWYDSL (285 aa). Residues 99–122 are Extracellular-facing; sequence PLLLGRIIASYDPDNKEERSIAIY. Residues 123–146 traverse the membrane as a helical segment; it reads LGIGLCLLFIVRTLLLHPAIFGLH. Topologically, residues 147–195 are cytoplasmic; it reads HIGMQMRIAMFSLIYKKTLKLSSRVLDKISIGQLVSLLSNNLNKFDEGL. The helical transmembrane segment at 196-216 threads the bilayer; sequence ALAHFVWIAPLQVALLMGLIW. Topologically, residues 217–222 are extracellular; it reads ELLQAS. The helical transmembrane segment at 223-243 threads the bilayer; sequence AFCGLGFLIVLALFQAGLGRM. At 244–298 the chain is on the cytoplasmic side; the sequence is MMKYRDQRAGKISERLVITSEMIENIQSVKAYCWEEAMEKMIENLRQTELKLTRK. A helical membrane pass occupies residues 299-319; sequence AAYVRYFNSSAFFFSGFFVVF. Over 320–339 the chain is Extracellular; that stretch reads LSVLPYALIKGIVLRKIFTT. The helical transmembrane segment at 340–358 threads the bilayer; that stretch reads ISFCIVLRMAVTRQFPWAV. Over 359–858 the chain is Cytoplasmic; sequence QTWYDSLGAI…YLRYITVHKS (500 aa). Residues Trp-401, Ser-434, 458-465, and Gln-493 contribute to the ATP site; that span reads GSTGAGKT. The ABC transporter 1 domain maps to 423-646; it reads NGDDSLFFSN…RPDFSSKLMG (224 aa). The S-palmitoyl cysteine moiety is linked to residue Cys-524. A phosphoserine mark is found at Ser-549 and Ser-660. A disordered R region region spans residues 654–831; sequence SAERRNSILT…EEINEEDLKE (178 aa). A Phosphoserine; by PKA modification is found at Ser-670. Ser-686 is subject to Phosphoserine. Residue Lys-688 forms a Glycyl lysine isopeptide (Lys-Gly) (interchain with G-Cter in ubiquitin) linkage. Phosphoserine is present on residues Ser-700 and Ser-712. Thr-717 bears the Phosphothreonine mark. Ser-737, Ser-753, Ser-768, Ser-790, Ser-795, and Ser-813 each carry phosphoserine. Residues 859–879 form a helical membrane-spanning segment; the sequence is LIFVLIWCLVIFLAEVAASLV. The ABC transmembrane type-1 2 domain maps to 859-1155; sequence LIFVLIWCLV…AVNSSIDVDS (297 aa). The Extracellular portion of the chain corresponds to 880–918; that stretch reads VLWLLGNTPLQDKGNSTHSRNNSYAVIITSTSSYYVFYI. N-linked (GlcNAc...) asparagine glycosylation is found at Asn-894 and Asn-900. A discontinuously helical transmembrane segment spans residues 919–939; sequence YVGVADTLLAMGFFRGLPLVH. The Cytoplasmic segment spans residues 940-990; sequence TLITVSKILHHKMLHSVLQAPMSTLNTLKAGGILNRFSKDIAILDDLLPLT. A helical membrane pass occupies residues 991–1011; the sequence is IFDFIQLLLIVIGAIAVVAVL. Topologically, residues 1012–1013 are extracellular; that stretch reads QP. The chain crosses the membrane as a helical span at residues 1014 to 1034; it reads YIFVATVPVIVAFIMLRAYFL. The Cytoplasmic portion of the chain corresponds to 1035-1095; the sequence is QTSQQLKQLE…TANWFLYLST (61 aa). A helical transmembrane segment spans residues 1096–1116; sequence LRWFQMRIEMIFVMFFIAVTF. The Extracellular portion of the chain corresponds to 1117–1130; the sequence is ISILTTGEGEGRIG. The chain crosses the membrane as a helical span at residues 1131 to 1151; it reads IILTLAMNIMSTLQWAVNSSI. At 1152 to 1480 the chain is on the cytoplasmic side; it reads DVDSLMRSVS…TEEEVQDTRL (329 aa). In terms of domain architecture, ABC transporter 2 spans 1210 to 1443; sequence MTVKDLSAKY…RSLFRQAISP (234 aa). ATP-binding positions include Tyr-1219 and 1244–1251; that span reads GRTGSGKS. Residues 1386–1480 form an interaction with GORASP2 region; that stretch reads RTLKQAFADC…TEEEVQDTRL (95 aa). Cys-1395 carries S-palmitoyl cysteine lipidation. Residues Ser-1444 and Ser-1456 each carry the phosphoserine modification. The disordered stretch occupies residues 1451 to 1480; it reads PHRNSSKGKSQPQIAALKEETEEEVQDTRL. Acidic residues predominate over residues 1470–1480; sequence ETEEEVQDTRL. A PDZ-binding motif is present at residues 1478–1480; sequence TRL.

It belongs to the ABC transporter superfamily. ABCC family. CFTR transporter (TC 3.A.1.202) subfamily. Monomer; does not require oligomerization for channel activity. May form oligomers in the membrane. Interacts with SLC26A3, SLC26A6 and NHERF1. Interacts with SHANK2. Interacts with MYO6. Interacts (via C-terminus) with GOPC (via PDZ domain); this promotes CFTR internalization and thereby decreases channel activity. Interacts with SLC4A7 through NHERF1. Found in a complex with MYO5B and RAB11A. Interacts with ANO1. Interacts with SLC26A8. Interacts with AHCYL1; the interaction increases CFTR activity. Interacts with CSE1L. The core-glycosylated form interacts with GORASP2 (via PDZ GRASP-type 1 domain) in respone to ER stress. Interacts with MARCHF2; the interaction leads to CFTR ubiqtuitination and degradation. Interacts with ADGRG2. In terms of processing, N-glycosylated. Post-translationally, phosphorylated; cAMP treatment promotes phosphorylation and activates the channel. Dephosphorylation decreases the ATPase activity (in vitro). Phosphorylation at PKA sites activates the channel. Phosphorylation at PKC sites enhances the response to phosphorylation by PKA. Phosphorylated by AMPK; this inhibits channel activity. Ubiquitinated, leading to its degradation in the lysosome. Deubiquitination by USP10 in early endosomes enhances its endocytic recycling to the cell membrane. Ubiquitinated by RNF185 during ER stress. Ubiquitinated by MARCHF2.

Its subcellular location is the apical cell membrane. It localises to the early endosome membrane. The protein localises to the cell membrane. The protein resides in the recycling endosome membrane. It is found in the endoplasmic reticulum membrane. Its subcellular location is the nucleus. The enzyme catalyses ATP + H2O + closed Cl(-) channel = ADP + phosphate + open Cl(-) channel.. It carries out the reaction chloride(in) = chloride(out). The catalysed reaction is hydrogencarbonate(in) = hydrogencarbonate(out). It catalyses the reaction ATP + H2O = ADP + phosphate + H(+). Functionally, epithelial ion channel that plays an important role in the regulation of epithelial ion and water transport and fluid homeostasis. Mediates the transport of chloride ions across the cell membrane. Possesses an intrinsic ATPase activity and utilizes ATP to gate its channel; the passive flow of anions through the channel is gated by cycles of ATP binding and hydrolysis by the ATP-binding domains. The ion channel is also permeable to HCO(3)(-); selectivity depends on the extracellular chloride concentration. Exerts its function also by modulating the activity of other ion channels and transporters. Contributes to the regulation of the pH and the ion content of the epithelial fluid layer. Modulates the activity of the epithelial sodium channel (ENaC) complex, in part by regulating the cell surface expression of the ENaC complex. May regulate bicarbonate secretion and salvage in epithelial cells by regulating the transporter SLC4A7. Can inhibit the chloride channel activity of ANO1. Plays a role in the chloride and bicarbonate homeostasis during sperm epididymal maturation and capacitation. In Nomascus leucogenys (Northern white-cheeked gibbon), this protein is Cystic fibrosis transmembrane conductance regulator.